A 153-amino-acid polypeptide reads, in one-letter code: Large ribosomal subunit protein uL15 (153 aa).

The tract at residues 21–41 (RGIGSGKGKTGGRGIKGQKSR) is disordered. Residues 23–35 (IGSGKGKTGGRGI) are compositionally biased toward gly residues.

It belongs to the universal ribosomal protein uL15 family. Part of the 50S ribosomal subunit.

Binds to the 23S rRNA. The protein is Large ribosomal subunit protein uL15 of Rickettsia felis (strain ATCC VR-1525 / URRWXCal2) (Rickettsia azadi).